Consider the following 247-residue polypeptide: UPF0273 protein PF1931 (247 aa).

Residues 3 to 247 (RRVKTGIPGM…VLKRGRIYEL (245 aa)) form the KaiC domain. Residue 30 to 37 (GGPGTGKS) coordinates ATP.

Belongs to the UPF0273 family.

The polypeptide is UPF0273 protein PF1931 (Pyrococcus furiosus (strain ATCC 43587 / DSM 3638 / JCM 8422 / Vc1)).